A 467-amino-acid polypeptide reads, in one-letter code: MTLTLYNTLTRKKEPFVPLEEGKVKMYVCGPTVYNYIHIGNARPAIVFDTVRKYLEYKGYEVQYVSNFTDVDDKLIKAANELGEEVPVIAERFIKAYFEDVGSLGCTKADCHPRVTENMDEIIDFIQTLIDKGYAYEADGDVYYKTRSFEGYGKLSHQSVDELRSGARIQVGEKKEDALDFTLWKAAKDNEISWDSPWGKGRPGWHIECSAMARKYLGDSIDIHAGGQDLAFPHHENEIAQSEALTGKPFAKYWLHNGYINIDNEKMSKSLGNFVLVHDIIKEHDPQVLRFFMLSVHYRHPINYSVELLENTKNAFGRLKTAYSNLQHRLKSSTNLTEGDSEWLEKIEEQRKAFQTAMDDDFNTANAISVLFDLAKHANYYLQEKNTAEHVIQAFIQLFDEICSVLGFSLKEQELLDKDIEELIEKRNEARRNRDFATSDQIRDQLKSMNIILEDTPQGTRWKRGES.

Residue Cys-29 coordinates Zn(2+). The 'HIGH' region signature appears at 31–41 (PTVYNYIHIGN). Residues Cys-209, His-234, and Glu-238 each contribute to the Zn(2+) site. The 'KMSKS' region motif lies at 266 to 270 (KMSKS). Residue Lys-269 coordinates ATP. Position 270 is a phosphoserine (Ser-270).

Belongs to the class-I aminoacyl-tRNA synthetase family. As to quaternary structure, monomer. Requires Zn(2+) as cofactor.

It is found in the cytoplasm. It catalyses the reaction tRNA(Cys) + L-cysteine + ATP = L-cysteinyl-tRNA(Cys) + AMP + diphosphate. The sequence is that of Cysteine--tRNA ligase from Bacillus licheniformis (strain ATCC 14580 / DSM 13 / JCM 2505 / CCUG 7422 / NBRC 12200 / NCIMB 9375 / NCTC 10341 / NRRL NRS-1264 / Gibson 46).